We begin with the raw amino-acid sequence, 220 residues long: Uracil-DNA glycosylase 1 (220 aa).

D65 serves as the catalytic Proton acceptor.

The protein belongs to the uracil-DNA glycosylase (UDG) superfamily. UNG family.

It is found in the cytoplasm. It carries out the reaction Hydrolyzes single-stranded DNA or mismatched double-stranded DNA and polynucleotides, releasing free uracil.. Functionally, excises uracil residues from the DNA which can arise as a result of misincorporation of dUMP residues by DNA polymerase or due to deamination of cytosine. The protein is Uracil-DNA glycosylase 1 of Bacteroides fragilis (strain ATCC 25285 / DSM 2151 / CCUG 4856 / JCM 11019 / LMG 10263 / NCTC 9343 / Onslow / VPI 2553 / EN-2).